The following is a 106-amino-acid chain: NADH-quinone oxidoreductase subunit K (106 aa).

Transmembrane regions (helical) follow at residues 10 to 30 (IHYYLILAMIIFTIGVAGVMV), 35 to 55 (VLIFMSVELILNSVNLVFVTF), and 67 to 87 (VVFFVMAIAAAEAAIGLAIVI).

Belongs to the complex I subunit 4L family. In terms of assembly, NDH-1 is composed of 14 different subunits. Subunits NuoA, H, J, K, L, M, N constitute the membrane sector of the complex.

Its subcellular location is the cell inner membrane. The catalysed reaction is a quinone + NADH + 5 H(+)(in) = a quinol + NAD(+) + 4 H(+)(out). In terms of biological role, NDH-1 shuttles electrons from NADH, via FMN and iron-sulfur (Fe-S) centers, to quinones in the respiratory chain. The immediate electron acceptor for the enzyme in this species is believed to be ubiquinone. Couples the redox reaction to proton translocation (for every two electrons transferred, four hydrogen ions are translocated across the cytoplasmic membrane), and thus conserves the redox energy in a proton gradient. This is NADH-quinone oxidoreductase subunit K from Leptospira borgpetersenii serovar Hardjo-bovis (strain JB197).